The chain runs to 159 residues: Cyclic pyranopterin monophosphate synthase (159 aa).

Substrate-binding positions include 75-77 and 113-114; these read LCH and ME. The active site involves Asp-128.

This sequence belongs to the MoaC family. As to quaternary structure, homohexamer; trimer of dimers.

It catalyses the reaction (8S)-3',8-cyclo-7,8-dihydroguanosine 5'-triphosphate = cyclic pyranopterin phosphate + diphosphate. The protein operates within cofactor biosynthesis; molybdopterin biosynthesis. Catalyzes the conversion of (8S)-3',8-cyclo-7,8-dihydroguanosine 5'-triphosphate to cyclic pyranopterin monophosphate (cPMP). This is Cyclic pyranopterin monophosphate synthase from Vibrio atlanticus (strain LGP32) (Vibrio splendidus (strain Mel32)).